Consider the following 225-residue polypeptide: Viral late gene transcription factor 3 (225 aa).

Residues C7–C27 fold into a zinc finger.

This sequence belongs to the nucleo-cytoplasmic large DNA viruses (NCLDVs) VLTF-3 family. As to quaternary structure, interacts with the late transcription elongation factor H5/VLTF-4. Interacts with the late transcription factors VLTF-1.

Functionally, acts with RNA polymerase to initiate transcription from late gene promoters. The chain is Viral late gene transcription factor 3 (VLTF3) from Fowlpox virus (strain NVSL) (FPV).